Here is a 64-residue protein sequence, read N- to C-terminus: Kappa-lycotoxin-Os1a (64 aa).

Intrachain disulfides connect Cys10–Cys26, Cys17–Cys56, Cys19–Cys42, and Cys28–Cys40.

It belongs to the neurotoxin 04 (omega-agtx) family. 01 (type I omega-agtx) subfamily. In terms of tissue distribution, expressed by the venom gland.

The protein localises to the secreted. Insecticidal to house crickets. It induces an excitatory slow-onset impact that leads to irreversible spastic paralysis. It also modifies human voltage-gated potassium channel Kv1.5/KCNA5. Most likely, it binds to the voltage-sensing domain of the channel, suggesting it does not block the pore but prevents its opening at physiological membrane potentials. The recombinant peptide binds to the channel in an irreversible manner and slows down the hKv1.5 current activation kinetics. It is not toxic to mice, when intracranially injected (at 0.5 ug/g mouse). This Oculicosa supermirabilis (Central Asian wolf-spider) protein is Kappa-lycotoxin-Os1a.